The sequence spans 370 residues: GTPase Obg (370 aa).

The region spanning 1-159 is the Obg domain; it reads MKFIDEARIE…RMLRLELKVL (159 aa). In terms of domain architecture, OBG-type G spans 160–334; that stretch reads ADVGLLGMPN…LCYAIYDYLA (175 aa). GTP-binding positions include 166 to 173, 191 to 195, 213 to 216, 284 to 287, and 315 to 317; these read GMPNAGKS, FTTLA, DIPG, NKLD, and SAL. 2 residues coordinate Mg(2+): serine 173 and threonine 193. The tract at residues 344-370 is disordered; that stretch reads EEEDLATDVRFRDAPPADGGATPGGDA.

Belongs to the TRAFAC class OBG-HflX-like GTPase superfamily. OBG GTPase family. As to quaternary structure, monomer. Mg(2+) serves as cofactor.

The protein resides in the cytoplasm. Its function is as follows. An essential GTPase which binds GTP, GDP and possibly (p)ppGpp with moderate affinity, with high nucleotide exchange rates and a fairly low GTP hydrolysis rate. Plays a role in control of the cell cycle, stress response, ribosome biogenesis and in those bacteria that undergo differentiation, in morphogenesis control. This Burkholderia ambifaria (strain MC40-6) protein is GTPase Obg.